The following is a 98-amino-acid chain: uncharacterized protein (98 aa).

Residues 1–10 (MARRRKPLHR) are compositionally biased toward basic residues. The segment at 1-21 (MARRRKPLHRQRPEPPSWALR) is disordered.

This is an uncharacterized protein from Mycobacterium bovis (strain ATCC BAA-935 / AF2122/97).